Consider the following 507-residue polypeptide: ATP synthase subunit alpha, chloroplastic (507 aa).

170–177 (GDRQTGKT) serves as a coordination point for ATP.

Belongs to the ATPase alpha/beta chains family. F-type ATPases have 2 components, CF(1) - the catalytic core - and CF(0) - the membrane proton channel. CF(1) has five subunits: alpha(3), beta(3), gamma(1), delta(1), epsilon(1). CF(0) has four main subunits: a, b, b' and c.

Its subcellular location is the plastid. The protein resides in the chloroplast thylakoid membrane. It carries out the reaction ATP + H2O + 4 H(+)(in) = ADP + phosphate + 5 H(+)(out). In terms of biological role, produces ATP from ADP in the presence of a proton gradient across the membrane. The alpha chain is a regulatory subunit. This chain is ATP synthase subunit alpha, chloroplastic, found in Oenothera glazioviana (Large-flowered evening primrose).